The following is a 332-amino-acid chain: Opticin (332 aa).

Residues 1 to 19 (MRLLAFLSLLALVLQETGT) form the signal peptide. Residues 21–41 (SLPRKERKRREEQMPREGDSF) form a disordered region. Positions 29–39 (RREEQMPREGD) are enriched in basic and acidic residues. Sulfotyrosine occurs at positions 65 and 71. A disordered region spans residues 86–106 (ATSISPAKSTTAPGTPSSNPT). The region spanning 116–153 (LLSSQPNHGLPTCLVCVCLGSSVYCDDIDLEDIPPLPR) is the LRRNT domain. Tyrosine 139 carries the post-translational modification Sulfotyrosine. 6 LRR repeats span residues 154–175 (RTAYLYARFNRISRIRAEDFKG), 178–199 (KLKRIDLSNNLISSIDNDAFRL), 202–223 (ALQDLILPENQLEALPVLPSGI), 248–269 (KLQFLYLSDNLLDSIPGPLPLS), 270–290 (LRSVHLQNNLIETMQRDVFCD), and 300–320 (QLEDIRLDGNPINLSLFPSAY). A disulfide bridge links cysteine 289 with cysteine 322. The N-linked (GlcNAc...) asparagine glycan is linked to asparagine 312.

It belongs to the small leucine-rich proteoglycan (SLRP) family. SLRP class III subfamily. Homodimer. In terms of processing, O-glycosylated. Proteolytically cleaved by MMP1, MMP2, MMP3, MMP7, MMP8, MMP9, ADAMTS4, and ADAMTS5. Proteolytically cleaved by MMP13. The degradation of OPTC by proteases may contribute to osteoarthritis pathophysiology. Post-translationally, sulfated on tyrosine residues. As to expression, expressed in cartilage and synovial membranes (at protein level). Expressed in the retina, iris, ligament, skin and fetal liver (at protein level). Expressed in the retinal pigment epithelium (at protein level). Expressed in synovial fibroblasts and subchondral bone osteoblasts.

The protein localises to the secreted. Its subcellular location is the extracellular space. The protein resides in the extracellular matrix. Its function is as follows. Inhibits angiogenesis in the vitreous humor of the eye, and therefore represses neovascularization. Binds collagen fibrils. May be involved in collagen fiber organization via regulation of other members of the small leucine-rich repeat proteoglycan superfamily. The protein is Opticin (OPTC) of Homo sapiens (Human).